Reading from the N-terminus, the 385-residue chain is Cytochrome b (385 aa).

4 consecutive transmembrane segments (helical) span residues 32 to 52 (FGSL…TLAM), 76 to 98 (WLVR…LHIG), 113 to 133 (TWAI…LGYV), and 179 to 199 (FFAL…MHLI). Heme b is bound by residues His82 and His96. His183 and His197 together coordinate heme b. His202 is a binding site for a ubiquinone. The next 4 helical transmembrane spans lie at 226 to 246 (FIFK…IFVF), 290 to 310 (LLGV…PITD), 322 to 342 (LSKV…QIGA), and 349 to 369 (FIEL…VIVP).

Belongs to the cytochrome b family. In terms of assembly, fungal cytochrome b-c1 complex contains 10 subunits; 3 respiratory subunits, 2 core proteins and 5 low-molecular weight proteins. Cytochrome b-c1 complex is a homodimer. Requires heme b as cofactor.

Its subcellular location is the mitochondrion inner membrane. Functionally, component of the ubiquinol-cytochrome c reductase complex (complex III or cytochrome b-c1 complex) that is part of the mitochondrial respiratory chain. The b-c1 complex mediates electron transfer from ubiquinol to cytochrome c. Contributes to the generation of a proton gradient across the mitochondrial membrane that is then used for ATP synthesis. In Aspergillus tubingensis, this protein is Cytochrome b (cob).